A 342-amino-acid polypeptide reads, in one-letter code: Autoinducer 2 import system permease protein LsrC (342 aa).

Residues 1–13 (MLKFIQNNREITA) lie on the Periplasmic side of the membrane. A helical transmembrane segment spans residues 14 to 34 (LLAVLLLFVLPGFLDRQYLSV). The Cytoplasmic portion of the chain corresponds to 35–38 (QTLT). A helical transmembrane segment spans residues 39–59 (MVYSSAQILILLAMGATLVML). Residues 60 to 69 (TRNIDVSVGS) lie on the Periplasmic side of the membrane. Residues 70-90 (ITGMCAVLLGMLLNAGYSLPV) form a helical membrane-spanning segment. The Cytoplasmic segment spans residues 91-92 (AC). The chain crosses the membrane as a helical span at residues 93–113 (VATLLLGLLAGFFNGVLVAWL). Residue lysine 114 is a topological domain, periplasmic. A helical membrane pass occupies residues 115 to 135 (IPAIVATLGTLGLYRGIMLLW). At 136–154 (TGGKWIEGLPAELKQLSAP) the chain is on the cytoplasmic side. The chain crosses the membrane as a helical span at residues 155-175 (LLLGVSAIGWLTIILVAFMAW). Residues 176-212 (LLAKTAFGRSFYATGDNLQGARQLGVRTEAIRIVAFS) are Periplasmic-facing. Residues 213-233 (LNGCMAALAGIVFASQIGFIP) form a helical membrane-spanning segment. At 234-251 (NQTGTGLEMKAIAACVLG) the chain is on the cytoplasmic side. Residues 252–272 (GISLLGGSGAIIGAVLGAWFL) form a helical membrane-spanning segment. Residues 273–283 (TQIDSVLVLLR) lie on the Periplasmic side of the membrane. A helical membrane pass occupies residues 284-304 (IPAWWNDFIAGLVLLAVLVFD). Topologically, residues 305-342 (GRLRCALELNLRRQKYARFMTPPPSVKPASSGKKREAA) are cytoplasmic.

This sequence belongs to the binding-protein-dependent transport system permease family. AraH/RbsC subfamily. As to quaternary structure, the complex is composed of two ATP-binding proteins (LsrA), two transmembrane proteins (LsrC and LsrD) and a solute-binding protein (LsrB).

The protein localises to the cell inner membrane. Functionally, part of the ABC transporter complex LsrABCD involved in autoinducer 2 (AI-2) import. Probably responsible for the translocation of the substrate across the membrane. This is Autoinducer 2 import system permease protein LsrC (lsrC) from Escherichia coli O157:H7.